The primary structure comprises 717 residues: MSGDGATEQAAEYVPEKVKKAEKKLEENPYDLDAWSILIREAQNQPIDKARKTYERLVAQFPSSGRFWKLYIEAEIKAKNYDKVEKLFQRCLMKVLHIDLWKCYLSYVRETKGKLPSYKEKMAQAYDFALDKIGMEIMSYQIWVDYINFLKGVEAVGSYAENQRITAVRRVYQRGCVNPMINIEQLWRDYNKYEEGINIHLAKKMIEDRSRDYMNARRVAKEYETVMKGLDRNAPSVPPQNTPQEAQQVDMWKKYIQWEKSNPLRTEDQTLITKRVMFAYEQCLLVLGHHPDIWYEAAQYLEQSSKLLAEKGDMNNAKLFSDEAANIYERAISTLLKKNMLLYFAYADYEESRMKYEKVHSIYNRLLAIEDIDPTLVYIQYMKFARRAEGIKSGRMIFKKAREDTRTRHHVYVTAALMEYYCSKDKSVAFKIFELGLKKYGDIPEYVLAYIDYLSHLNEDNNTRVLFERVLTSGSLPPEKSGEIWARFLAFESNIGDLASILKVEKRRFTAFKEEYEGKETALLVDRYKFMDLYPCSASELKALGYKDVSRAKLAAIIPDPVVAPSIVPVLKDEVDRKPEYPKPDTQQMIPFQPRHLAPPGLHPVPGGVFPVPPAAVVLMKLLPPPICFQGPFVQVDELMEIFRRCKIPNTVEEAVRIITGGAPELAVEGNGPVESNAVLTKAVKRPNEDSDEDEEKGAVVPPVHDIYRARQQKRIR.

At Ser-2 the chain carries N-acetylserine. HAT repeat units follow at residues 45 to 77 (QPID…AEIK), 79 to 110 (KNYD…YVRE), 117 to 152 (SYKE…FLKG), 163 to 196 (QRIT…YEEG), 221 to 261 (KEYE…WEKS), 271 to 303 (LITK…YLEQ), 319 to 352 (LFSD…YEES), 354 to 387 (MKYE…FARR), and 458 to 494 (NEDN…FESN). A disordered region spans residues 684–705 (VKRPNEDSDEDEEKGAVVPPVH). Position 691 is a phosphoserine (Ser-691).

Homodimer. The CSTF complex is composed of CSTF1 (50 kDa subunit), CSTF2 (64 kDa subunit) and CSTF3 (77 kDa subunit). CSTF3 directly interacts with CSTF1 and CSTF2. Interacts with FIP1L1.

Its subcellular location is the nucleus. In terms of biological role, one of the multiple factors required for polyadenylation and 3'-end cleavage of mammalian pre-mRNAs. The polypeptide is Cleavage stimulation factor subunit 3 (CSTF3) (Homo sapiens (Human)).